The primary structure comprises 302 residues: Phosphatidylglycerol--prolipoprotein diacylglyceryl transferase (302 aa).

The next 7 membrane-spanning stretches (helical) occupy residues 19–39 (FGPL…LLGW), 67–87 (LVLW…FVFY), 108–128 (IWEG…AIIL), 143–163 (LIAP…FING), 203–223 (QLYE…FAIY), 232–252 (GALV…LENV), and 264–284 (LGLT…GWLL). R156 contributes to the a 1,2-diacyl-sn-glycero-3-phospho-(1'-sn-glycerol) binding site.

The protein belongs to the Lgt family.

It localises to the cell inner membrane. The enzyme catalyses L-cysteinyl-[prolipoprotein] + a 1,2-diacyl-sn-glycero-3-phospho-(1'-sn-glycerol) = an S-1,2-diacyl-sn-glyceryl-L-cysteinyl-[prolipoprotein] + sn-glycerol 1-phosphate + H(+). Its pathway is protein modification; lipoprotein biosynthesis (diacylglyceryl transfer). Its function is as follows. Catalyzes the transfer of the diacylglyceryl group from phosphatidylglycerol to the sulfhydryl group of the N-terminal cysteine of a prolipoprotein, the first step in the formation of mature lipoproteins. This chain is Phosphatidylglycerol--prolipoprotein diacylglyceryl transferase, found in Caulobacter vibrioides (strain ATCC 19089 / CIP 103742 / CB 15) (Caulobacter crescentus).